The following is a 592-amino-acid chain: Vacuolin-B (592 aa).

Residues 1–30 (MIESSSFMKKTSSENSIGSRSNIHEASTFS) show a composition bias toward polar residues. The interval 1-35 (MIESSSFMKKTSSENSIGSRSNIHEASTFSSEHEN) is disordered. Positions 480–534 (KTTEARLKAETDNIALEQKGKAIIAEAQAKLESAQKQAQALLITAEAQKKVQEMQ) form a coiled coil. The tract at residues 491–555 (DNIALEQKGK…EIELAKIKSE (65 aa)) is oligomerization domain.

This sequence belongs to the vacuolin family. As to quaternary structure, homotrimer.

It localises to the endosome membrane. Its subcellular location is the lysosome membrane. Negative regulator of late steps of the endocytic pathway. This is Vacuolin-B (vacB) from Dictyostelium discoideum (Social amoeba).